Consider the following 280-residue polypeptide: Undecaprenyl-diphosphatase (280 aa).

7 consecutive transmembrane segments (helical) span residues 1–21 (MTLL…PFPV), 45–65 (FLPF…GVFW), 90–110 (IFGL…LLEH), 115–135 (VFGT…LLMV), 151–171 (IATL…LALL), 226–246 (IMVQ…ICSL), and 260–280 (LTPF…VILL).

The protein belongs to the UppP family.

Its subcellular location is the cell inner membrane. The catalysed reaction is di-trans,octa-cis-undecaprenyl diphosphate + H2O = di-trans,octa-cis-undecaprenyl phosphate + phosphate + H(+). Its function is as follows. Catalyzes the dephosphorylation of undecaprenyl diphosphate (UPP). Confers resistance to bacitracin. In Gluconobacter oxydans (strain 621H) (Gluconobacter suboxydans), this protein is Undecaprenyl-diphosphatase.